Consider the following 712-residue polypeptide: Frizzled-6 (712 aa).

Residues 1 to 18 (MEMFTFLLTCVFLPFVRG) form the signal peptide. In terms of domain architecture, FZ spans 19–132 (HSLFTCEPIT…CDRLQYCDET (114 aa)). Residues 19–201 (HSLFTCEPIT…SDELEFAKSF (183 aa)) lie on the Extracellular side of the membrane. Cystine bridges form between C24–C85, C32–C78, C69–C106, C95–C129, and C99–C123. Residue N38 is glycosylated (N-linked (GlcNAc...) asparagine). Residues 202–222 (IGIVSIFCLCATLFTFLTFLI) form a helical membrane-spanning segment. Topologically, residues 223-233 (DVKRFRYPERP) are cytoplasmic. A helical transmembrane segment spans residues 234 to 254 (IIYYSVCYSIVSLMYFIGFLL). The Extracellular segment spans residues 255 to 284 (GDRTACNKADEKLELGDTVVLGSQNKACTV). Residues 285 to 305 (LFMFLYFFTMAGTVWWVILTI) form a helical membrane-spanning segment. At 306-324 (TWFLAAGRKWSCEAIEQKA) the chain is on the cytoplasmic side. A helical transmembrane segment spans residues 325–345 (VWFHAVAWGIPGFLTVMLLAM). The Extracellular portion of the chain corresponds to 346 to 370 (NKVEGDNISGVCFVGLYDLDASRYF). N352 is a glycosylation site (N-linked (GlcNAc...) asparagine). A helical membrane pass occupies residues 371 to 391 (VLLPLCLCVFVGLSLLLAGII). Over 392 to 416 (SLNHVRQVIQHDGRNQEKLKKFMIR) the chain is Cytoplasmic. A helical membrane pass occupies residues 417–437 (IGVFSGLYLVPLVTLLGCYVY). At 438-473 (EQVNRITWEITWVSDHCRQYHIPCPYQAKTETRPEL) the chain is on the extracellular side. Residues 474 to 494 (ALFMIKYLMTLIVGISAVFWV) form a helical membrane-spanning segment. Over 495–712 (GSKKTCTEWA…EHGTGSHSDT (218 aa)) the chain is Cytoplasmic. Positions 498-503 (KTCTEW) match the Lys-Thr-X-X-X-Trp motif, mediates interaction with the PDZ domain of Dvl family members motif. The interval 588–712 (EIQTSPETSV…EHGTGSHSDT (125 aa)) is disordered. 2 stretches are compositionally biased toward basic and acidic residues: residues 628–637 (LCEEQADRKG) and 652–664 (TRSE…KSDV). Polar residues predominate over residues 668 to 693 (GPMQSSSLQVPGSSEPGSLKGSTSLL). Over residues 700–712 (GRKEHGTGSHSDT) the composition is skewed to basic and acidic residues.

It belongs to the G-protein coupled receptor Fz/Smo family. Interacts with LMBR1L. In terms of processing, ubiquitinated by ZNRF3, leading to its degradation by the proteasome.

It localises to the membrane. The protein localises to the cell membrane. Its subcellular location is the cell surface. The protein resides in the apical cell membrane. It is found in the cytoplasmic vesicle membrane. It localises to the endoplasmic reticulum membrane. Its function is as follows. Receptor for Wnt proteins. Most of frizzled receptors are coupled to the beta-catenin canonical signaling pathway, which leads to the activation of disheveled proteins, inhibition of GSK-3 kinase, nuclear accumulation of beta-catenin and activation of Wnt target genes. A second signaling pathway involving PKC and calcium fluxes has been seen for some family members, but it is not yet clear if it represents a distinct pathway or if it can be integrated in the canonical pathway, as PKC seems to be required for Wnt-mediated inactivation of GSK-3 kinase. Both pathways seem to involve interactions with G-proteins. Activation by Wnt5A stimulates PKC activity via a G-protein-dependent mechanism. Involved in transduction and intercellular transmission of polarity information during tissue morphogenesis and/or in differentiated tissues. Together with FZD3, is involved in the neural tube closure and plays a role in the regulation of the establishment of planar cell polarity (PCP), particularly in the orientation of asymmetric bundles of stereocilia on the apical faces of a subset of auditory and vestibular sensory cells located in the inner ear. The protein is Frizzled-6 (FZD6) of Canis lupus familiaris (Dog).